Here is a 78-residue protein sequence, read N- to C-terminus: Small acidic protein 2 (78 aa).

In terms of tissue distribution, expressed in siliques and anthers.

Its function is as follows. Mediates responses to the synthetic auxin 2,4-dichlorophenoxyacetic acid (2,4-D). Not involved in the response to indole-3-acetic acid (IAA). May interact with RUB modification-related components and may regulate the culling-ring ubiquitin E3 ligase complex (CRL) activity. This chain is Small acidic protein 2 (SMAP2), found in Arabidopsis thaliana (Mouse-ear cress).